The primary structure comprises 334 residues: Heat-inducible transcription repressor HrcA (334 aa).

Belongs to the HrcA family.

Negative regulator of class I heat shock genes (grpE-dnaK-dnaJ and groELS operons). Prevents heat-shock induction of these operons. In Verminephrobacter eiseniae (strain EF01-2), this protein is Heat-inducible transcription repressor HrcA.